The sequence spans 439 residues: UDP-N-acetylmuramate--L-alanine ligase (439 aa).

113–119 (GSHGKTS) is an ATP binding site.

It belongs to the MurCDEF family.

The protein localises to the cytoplasm. It carries out the reaction UDP-N-acetyl-alpha-D-muramate + L-alanine + ATP = UDP-N-acetyl-alpha-D-muramoyl-L-alanine + ADP + phosphate + H(+). It functions in the pathway cell wall biogenesis; peptidoglycan biosynthesis. Functionally, cell wall formation. The polypeptide is UDP-N-acetylmuramate--L-alanine ligase (Lactobacillus delbrueckii subsp. bulgaricus (strain ATCC 11842 / DSM 20081 / BCRC 10696 / JCM 1002 / NBRC 13953 / NCIMB 11778 / NCTC 12712 / WDCM 00102 / Lb 14)).